We begin with the raw amino-acid sequence, 261 residues long: tRNA pseudouridine synthase A (261 aa).

Catalysis depends on Asp51, which acts as the Nucleophile. Tyr109 is a substrate binding site.

This sequence belongs to the tRNA pseudouridine synthase TruA family. As to quaternary structure, homodimer.

The enzyme catalyses uridine(38/39/40) in tRNA = pseudouridine(38/39/40) in tRNA. Its function is as follows. Formation of pseudouridine at positions 38, 39 and 40 in the anticodon stem and loop of transfer RNAs. This Shewanella amazonensis (strain ATCC BAA-1098 / SB2B) protein is tRNA pseudouridine synthase A.